Consider the following 190-residue polypeptide: Probable GTP-binding protein EngB (190 aa).

One can recognise an EngB-type G domain in the interval 22–190 (VKREVAFAGR…LNELLKILIP (169 aa)). Residues 30-37 (GRSNVGKS), 56-60 (GKTRS), 74-77 (DLPG), 141-144 (TKTD), and 173-175 (FSA) each bind GTP. Residues serine 37 and threonine 58 each coordinate Mg(2+).

Belongs to the TRAFAC class TrmE-Era-EngA-EngB-Septin-like GTPase superfamily. EngB GTPase family. Mg(2+) serves as cofactor.

Functionally, necessary for normal cell division and for the maintenance of normal septation. The chain is Probable GTP-binding protein EngB from Kosmotoga olearia (strain ATCC BAA-1733 / DSM 21960 / TBF 19.5.1).